Here is a 296-residue protein sequence, read N- to C-terminus: Testis-expressed protein 26 (296 aa).

Mn stretches follow at residues 30 to 42 (ATTMKTAFTPKRG), 69 to 83 (ESQYHDEYTWKLRSK), 140 to 153 (ISCTKRDFVDLTQS), 175 to 189 (DTEFRYNYQIPAQIP), and 229 to 243 (QTTYECDYGKACLDF).

The sequence is that of Testis-expressed protein 26 (Tex26) from Mus musculus (Mouse).